The chain runs to 324 residues: MYVLGIEGTAWNLSAAIVNEDDVIIERAATYTPARGGIHPREAAQHHSEHIGPLLREVIQGARDLGIKIDGVAFSQGPGLGPCLRTVATAARVLALKLNVPLVGVNHCIAHIEIGKWKTGARDPAVLYVSGGNSQVLALRRGRYRIFGETLDISVGNMLDKFARSVGLPHPGGPRIEELARNAKEYIPLPYTVKGMDFSFSGLATAAAEAARRYDLEDVCYSLQETAFAMLVEVTERAMAHAEKKEAMLVGGVGANRRLGEMLRLMCEERGARFYLPERRFMGDNGSMIAYTGLVMLKSGVSTPIESSGVRPNYRTDEVEVRWA.

Residues H107, H111, and Y128 each contribute to the Fe cation site. Substrate-binding positions include 128–132 (YVSGG), D160, G173, E177, and N256. A Fe cation-binding site is contributed by D284.

Belongs to the KAE1 / TsaD family. Monomer. Component of the KEOPS complex that consists of Kae1, Bud32, Cgi121 and Pcc1; the whole complex dimerizes. Fe(2+) serves as cofactor.

The protein localises to the cytoplasm. It carries out the reaction L-threonylcarbamoyladenylate + adenosine(37) in tRNA = N(6)-L-threonylcarbamoyladenosine(37) in tRNA + AMP + H(+). Its function is as follows. Required for the formation of a threonylcarbamoyl group on adenosine at position 37 (t(6)A37) in tRNAs that read codons beginning with adenine. Is a component of the KEOPS complex that is probably involved in the transfer of the threonylcarbamoyl moiety of threonylcarbamoyl-AMP (TC-AMP) to the N6 group of A37. Kae1 likely plays a direct catalytic role in this reaction, but requires other protein(s) of the complex to fulfill this activity. This chain is tRNA N6-adenosine threonylcarbamoyltransferase, found in Methanothrix thermoacetophila (strain DSM 6194 / JCM 14653 / NBRC 101360 / PT) (Methanosaeta thermophila).